The following is a 372-amino-acid chain: Glutamate 5-kinase (372 aa).

Residue lysine 14 coordinates ATP. Residues serine 54, aspartate 141, and asparagine 153 each coordinate substrate. Residue 173–174 coordinates ATP; that stretch reads TD. The PUA domain occupies 280-358; the sequence is RGHVVIDAGA…GEIETVLGYM (79 aa).

Belongs to the glutamate 5-kinase family.

It is found in the cytoplasm. The enzyme catalyses L-glutamate + ATP = L-glutamyl 5-phosphate + ADP. The protein operates within amino-acid biosynthesis; L-proline biosynthesis; L-glutamate 5-semialdehyde from L-glutamate: step 1/2. Functionally, catalyzes the transfer of a phosphate group to glutamate to form L-glutamate 5-phosphate. This Burkholderia ambifaria (strain ATCC BAA-244 / DSM 16087 / CCUG 44356 / LMG 19182 / AMMD) (Burkholderia cepacia (strain AMMD)) protein is Glutamate 5-kinase.